Consider the following 185-residue polypeptide: Ribosome-recycling factor (185 aa).

The protein belongs to the RRF family.

It localises to the cytoplasm. In terms of biological role, responsible for the release of ribosomes from messenger RNA at the termination of protein biosynthesis. May increase the efficiency of translation by recycling ribosomes from one round of translation to another. The polypeptide is Ribosome-recycling factor (Shewanella pealeana (strain ATCC 700345 / ANG-SQ1)).